Reading from the N-terminus, the 321-residue chain is Lipoyl synthase (321 aa).

Positions 68, 73, 79, 94, 98, 101, and 308 each coordinate [4Fe-4S] cluster. In terms of domain architecture, Radical SAM core spans Phe80–Thr297.

The protein belongs to the radical SAM superfamily. Lipoyl synthase family. [4Fe-4S] cluster serves as cofactor.

The protein localises to the cytoplasm. The catalysed reaction is [[Fe-S] cluster scaffold protein carrying a second [4Fe-4S](2+) cluster] + N(6)-octanoyl-L-lysyl-[protein] + 2 oxidized [2Fe-2S]-[ferredoxin] + 2 S-adenosyl-L-methionine + 4 H(+) = [[Fe-S] cluster scaffold protein] + N(6)-[(R)-dihydrolipoyl]-L-lysyl-[protein] + 4 Fe(3+) + 2 hydrogen sulfide + 2 5'-deoxyadenosine + 2 L-methionine + 2 reduced [2Fe-2S]-[ferredoxin]. Its pathway is protein modification; protein lipoylation via endogenous pathway; protein N(6)-(lipoyl)lysine from octanoyl-[acyl-carrier-protein]: step 2/2. Catalyzes the radical-mediated insertion of two sulfur atoms into the C-6 and C-8 positions of the octanoyl moiety bound to the lipoyl domains of lipoate-dependent enzymes, thereby converting the octanoylated domains into lipoylated derivatives. The polypeptide is Lipoyl synthase (Proteus mirabilis (strain HI4320)).